The chain runs to 143 residues: Peptide methionine sulfoxide reductase MsrB (143 aa).

The MsrB domain occupies 16 to 139 (DAELRRRLTP…NSAALNFESR (124 aa)). Zn(2+) is bound by residues Cys-55, Cys-58, Cys-104, and Cys-107. Cys-128 acts as the Nucleophile in catalysis.

This sequence belongs to the MsrB Met sulfoxide reductase family. Requires Zn(2+) as cofactor.

The enzyme catalyses L-methionyl-[protein] + [thioredoxin]-disulfide + H2O = L-methionyl-(R)-S-oxide-[protein] + [thioredoxin]-dithiol. This chain is Peptide methionine sulfoxide reductase MsrB, found in Burkholderia vietnamiensis (strain G4 / LMG 22486) (Burkholderia cepacia (strain R1808)).